Here is a 685-residue protein sequence, read N- to C-terminus: Amino acid transporter heavy chain SLC3A1 (685 aa).

A compositionally biased stretch (basic and acidic residues) spans 1–10; sequence MDEDKGKRDP. The disordered stretch occupies residues 1-53; that stretch reads MDEDKGKRDPIQMSLKGCRTNNGFVQNEDIPEQDPDPGSRDTPQPNAVSIPAP. The Cytoplasmic segment spans residues 1 to 88; the sequence is MDEDKGKRDP…ARYRVPREIL (88 aa). The helical; Signal-anchor for type II membrane protein transmembrane segment at 89–109 threads the bilayer; that stretch reads FWLTVVSVFLLIGATIAIIVI. Topologically, residues 110-685 are extracellular; it reads SPKCLDWWQA…SALDILYSSC (576 aa). N213 serves as a coordination point for Ca(2+). N-linked (GlcNAc...) asparagine glycosylation is found at N213, N240, and N260. The cysteines at positions 241 and 272 are disulfide-linked. The Ca(2+) site is built by D283, F317, L318, and E320. Residue N331 is glycosylated (N-linked (GlcNAc...) asparagine). At S385 the chain carries Phosphoserine. N512 and N522 each carry an N-linked (GlcNAc...) asparagine glycan. Cystine bridges form between C570/C666 and C673/C685.

Disulfide-linked heterodimer composed of the catalytic light subunit SLC7A9 and the heavy subunit SLC3A1. The heterodimer is the minimal functional unit. Assembles in non-covalently linked heterotetramers (dimers of heterodimers) and higher order oligomers; the oligomerization is mediated by SLC3A1 likely to prevent degradation in the endoplasmic reticulum and facilitate heteromer trafficking to the plasma membrane. Disulfide-linked heterodimer composed of the catalytic light subunit SLC7A13 and the heavy subunit SLC3A1. Expressed in the brush border membrane in the kidney (at protein level). Highly expressed in renal tubules in the outer stripe of the outer medulla and medullary ray (at protein level). Also detected in the renal cortex. More abundant in male than female kidneys.

The protein resides in the cell membrane. It is found in the apical cell membrane. Its function is as follows. Acts as a chaperone that facilitates biogenesis and trafficking of functional transporter heteromers to the plasma membrane. Associates with SLC7A9 to form a functional transporter complex that mediates the electrogenic exchange between cationic amino acids and neutral amino acids, with a stoichiometry of 1:1. SLC7A9-SLC3A1 transporter has system b(0,+)-like activity with high affinity for extracellular cationic amino acids and L-cystine and lower affinity for intracellular neutral amino acids. Substrate exchange is driven by high concentration of intracellular neutral amino acids and the intracellular reduction of L-cystine to L-cysteine. SLC7A9-SLC3A1 acts as a major transporter for reabsorption of L-cystine and dibasic amino acids across the brush border membrane in early proximal tubules. Associates with SLC7A13 to form a functional complex that transports anionic and neutral amino acids via exchange or facilitated diffusion. SLC7A13-SLC3A1 may act as a major transporter for L-cystine in late proximal tubules, ensuring its reabsorption from the luminal fluid in exchange for cytosolic L-glutamate or L-aspartate. The sequence is that of Amino acid transporter heavy chain SLC3A1 from Mus musculus (Mouse).